The sequence spans 330 residues: o-succinylbenzoate synthase (330 aa).

The active-site Proton donor is K130. The Mg(2+) site is built by D155, E184, and D206. The active-site Proton acceptor is K228.

This sequence belongs to the mandelate racemase/muconate lactonizing enzyme family. MenC type 1 subfamily. Monomer. It depends on a divalent metal cation as a cofactor.

The catalysed reaction is (1R,6R)-6-hydroxy-2-succinyl-cyclohexa-2,4-diene-1-carboxylate = 2-succinylbenzoate + H2O. Its pathway is quinol/quinone metabolism; 1,4-dihydroxy-2-naphthoate biosynthesis; 1,4-dihydroxy-2-naphthoate from chorismate: step 4/7. It functions in the pathway cofactor biosynthesis; phylloquinone biosynthesis. Converts 2-succinyl-6-hydroxy-2,4-cyclohexadiene-1-carboxylate (SHCHC) to 2-succinylbenzoate (OSB). Does not show N-succinylamino acid racemase (NSAR) activity with N-succinyl-L-phenylglycine as substrate. The chain is o-succinylbenzoate synthase from Bdellovibrio bacteriovorus (strain ATCC 15356 / DSM 50701 / NCIMB 9529 / HD100).